Consider the following 351-residue polypeptide: Protein MGF 360-12L (351 aa).

Residues 57-89 (DLNMALVKAVKENNYSLIKLFTEWGANINYGLI) form an ANK repeat.

The protein belongs to the asfivirus MGF 360 family.

Its function is as follows. Plays a role in virus cell tropism, and may be required for efficient virus replication in macrophages. This Ornithodoros (relapsing fever ticks) protein is Protein MGF 360-12L.